The following is a 125-amino-acid chain: Glycine cleavage system H protein (125 aa).

The Lipoyl-binding domain occupies 23 to 105 (VSTVGITEHA…FEGGWLFKVR (83 aa)). Lys-64 is modified (N6-lipoyllysine).

The protein belongs to the GcvH family. In terms of assembly, the glycine cleavage system is composed of four proteins: P, T, L and H. It depends on (R)-lipoate as a cofactor.

Functionally, the glycine cleavage system catalyzes the degradation of glycine. The H protein shuttles the methylamine group of glycine from the P protein to the T protein. This Streptomyces avermitilis (strain ATCC 31267 / DSM 46492 / JCM 5070 / NBRC 14893 / NCIMB 12804 / NRRL 8165 / MA-4680) protein is Glycine cleavage system H protein.